A 5112-amino-acid polypeptide reads, in one-letter code: Malformin synthetase mlfA (5112 aa).

An adenylation 1 region spans residues 225–616 (ERHAANRPHS…CGRADTQVKL (392 aa)). A Carrier 1 domain is found at 757–830 (SRLEQEIQLA…EAASLAEVQE (74 aa)). At serine 791 the chain carries O-(pantetheine 4'-phosphoryl)serine. The tract at residues 868–1299 (EDVFPCTTMQ…ALDSLTLLQA (432 aa)) is condensation 1. Residues 1327–1716 (DRRVTRQPDT…GRKDTQVKLR (390 aa)) are adenylation 2. The region spanning 1854–1931 (TAASELERTL…QLAAELGESP (78 aa)) is the Carrier 2 domain. O-(pantetheine 4'-phosphoryl)serine is present on serine 1891. Disordered regions lie at residues 1926-1961 (ELGESPRSSTSSASSSTEDEFTISTPDDSSTNDGVD) and 1994-2034 (GGSS…VPEP). Composition is skewed to low complexity over residues 1930–1941 (SPRSSTSSASSS) and 1994–2012 (GGSSSSKTPSVSSSSSSSS). A condensation 2 region spans residues 2064–2479 (EDIYPATALQ…AVSYSDKQTL (416 aa)). The segment at 2502-2894 (IRTPHAPAVC…IGRRDGQVKL (393 aa)) is adenylation 3. The Carrier 3 domain occupies 3030–3106 (RPTTAKECEM…QLLFHLRNAK (77 aa)). Serine 3067 carries the O-(pantetheine 4'-phosphoryl)serine modification. Condensation stretches follow at residues 3122 to 3586 (WVDL…TYEQ) and 3607 to 4044 (NIYP…EQLV). The tract at residues 4069 to 4459 (HSSRQAVCAW…VGRKDNQIKF (391 aa)) is adenylation 4. Positions 4593–4669 (MPSTEAECIM…DLARHNSLVQ (77 aa)) constitute a Carrier 4 domain. Serine 4630 carries the post-translational modification O-(pantetheine 4'-phosphoryl)serine. Residues 4724-5106 (IVVDIPGRIS…VEKVVALLRD (383 aa)) form a condensation 5 region.

The protein belongs to the NRP synthetase family.

The protein operates within secondary metabolite biosynthesis. Functionally, nonribosomal peptide synthetase; part of the gene cluster that mediates the biosynthesis of malformins, cyclic pentapeptides with a disulfide bond between 2 consecutive cysteins, that show potential anti-tumor as well as antimalarial and antitrypanosomal properties. The nonribosomal peptide synthetase mlfA is responsible of the formation of the cyclic pentapeptide. MlfA probably acts iteratively on one amino acid and possesses multiple amino acid specificities since it is involved in the biosynthesis of multiple malformins, including malformin C and malformin A2. Malformin C corresponds to a cyclo[D-Cys-D-Cys-Val-D-Leu-Val] pentapeptide whereas malformin A2 corresponds to a cyclo[D-Cys-D-Cys-Val-D-Leu-Ile] pentapeptide. The malformin biosynthesis clusters in malformin-producing fungi also contain enzymes involved in the formation of the disulfide bond between the two consecutive cysteins within malformins, in addition to additional tailoring enzymes such as methyltransferases or oxidoreductases. They are also composed of up to 4 major facilitator superfamily transporters, and transcription factors probably involved in the regulation of the expression of those clusters. This Aspergillus brasiliensis (strain CBS 101740 / IMI 381727 / IBT 21946) protein is Malformin synthetase mlfA.